The following is a 280-amino-acid chain: 4-diphosphocytidyl-2-C-methyl-D-erythritol kinase (280 aa).

Lys8 is a catalytic residue. 91–101 (PVSAGLAGGSS) lines the ATP pocket. The active site involves Asp133.

This sequence belongs to the GHMP kinase family. IspE subfamily.

It catalyses the reaction 4-CDP-2-C-methyl-D-erythritol + ATP = 4-CDP-2-C-methyl-D-erythritol 2-phosphate + ADP + H(+). It functions in the pathway isoprenoid biosynthesis; isopentenyl diphosphate biosynthesis via DXP pathway; isopentenyl diphosphate from 1-deoxy-D-xylulose 5-phosphate: step 3/6. In terms of biological role, catalyzes the phosphorylation of the position 2 hydroxy group of 4-diphosphocytidyl-2C-methyl-D-erythritol. The protein is 4-diphosphocytidyl-2-C-methyl-D-erythritol kinase of Clostridium novyi (strain NT).